A 161-amino-acid chain; its full sequence is Nucleotide-binding protein HCH_04620 (161 aa).

This sequence belongs to the YajQ family.

Nucleotide-binding protein. This chain is Nucleotide-binding protein HCH_04620, found in Hahella chejuensis (strain KCTC 2396).